We begin with the raw amino-acid sequence, 412 residues long: Phytoene synthase 1, chloroplastic (412 aa).

A chloroplast-targeting transit peptide spans 1 to 129; it reads MSVALLWVVS…AYDRCGEVCA (129 aa).

This sequence belongs to the phytoene/squalene synthase family. Monomer. Interacts with SGR1.

The protein resides in the plastid. Its subcellular location is the chloroplast. It catalyses the reaction 2 (2E,6E,10E)-geranylgeranyl diphosphate = 15-cis-phytoene + 2 diphosphate. It participates in carotenoid biosynthesis; phytoene biosynthesis; all-trans-phytoene from geranylgeranyl diphosphate: step 1/1. Its function is as follows. Catalyzes the reaction from prephytoene diphosphate to phytoene. This is Phytoene synthase 1, chloroplastic (PSY1) from Solanum lycopersicum (Tomato).